The chain runs to 874 residues: Leucine--tRNA ligase (874 aa).

Positions P43–H53 match the 'HIGH' region motif. Residues K630–S634 carry the 'KMSKS' region motif. K633 contributes to the ATP binding site.

Belongs to the class-I aminoacyl-tRNA synthetase family.

Its subcellular location is the cytoplasm. It carries out the reaction tRNA(Leu) + L-leucine + ATP = L-leucyl-tRNA(Leu) + AMP + diphosphate. This is Leucine--tRNA ligase from Bradyrhizobium diazoefficiens (strain JCM 10833 / BCRC 13528 / IAM 13628 / NBRC 14792 / USDA 110).